The chain runs to 133 residues: Nodulation protein K (133 aa).

This chain is Nodulation protein K (nodK), found in Bradyrhizobium elkanii.